We begin with the raw amino-acid sequence, 313 residues long: Protein FixB (313 aa).

255-283 (LYLAVGISGQIQHMVGANASQTIFAINKD) contacts FAD.

Belongs to the ETF alpha-subunit/FixB family. In terms of assembly, heterodimer of FixA and FixB.

It functions in the pathway amine and polyamine metabolism; carnitine metabolism. Functionally, required for anaerobic carnitine reduction. May bring reductant to CaiA. This chain is Protein FixB, found in Escherichia coli O17:K52:H18 (strain UMN026 / ExPEC).